Here is a 294-residue protein sequence, read N- to C-terminus: Large ribosomal subunit protein uL2 (294 aa).

2 disordered regions span residues 1–37 (MGIR…RPEK) and 228–294 (GSVM…RAAQ). A compositionally biased stretch (basic and acidic residues) spans 23-37 (ELSRDENGKRPRPEK). Positions 264–285 (KTRKRNKPSNKFIVRGRRRGGR) are enriched in basic residues.

The protein belongs to the universal ribosomal protein uL2 family. Part of the 50S ribosomal subunit. Forms a bridge to the 30S subunit in the 70S ribosome.

Its function is as follows. One of the primary rRNA binding proteins. Required for association of the 30S and 50S subunits to form the 70S ribosome, for tRNA binding and peptide bond formation. It has been suggested to have peptidyltransferase activity; this is somewhat controversial. Makes several contacts with the 16S rRNA in the 70S ribosome. The polypeptide is Large ribosomal subunit protein uL2 (Synechococcus sp. (strain JA-2-3B'a(2-13)) (Cyanobacteria bacterium Yellowstone B-Prime)).